Consider the following 881-residue polypeptide: DNA mismatch repair protein MutS (881 aa).

612-619 provides a ligand contact to ATP; it reads GPNMAGKS.

Belongs to the DNA mismatch repair MutS family.

Functionally, this protein is involved in the repair of mismatches in DNA. It is possible that it carries out the mismatch recognition step. This protein has a weak ATPase activity. This chain is DNA mismatch repair protein MutS, found in Clostridium tetani (strain Massachusetts / E88).